A 395-amino-acid chain; its full sequence is Elongation factor Tu (395 aa).

Residues 10–204 (KPHVNVGTIG…AVDNWVPLPE (195 aa)) enclose the tr-type G domain. Residues 19–26 (GHVDHGKT) are G1. 19–26 (GHVDHGKT) lines the GTP pocket. A Mg(2+)-binding site is contributed by threonine 26. Positions 60-64 (GITIN) are G2. A G3 region spans residues 81–84 (DCPG). GTP-binding positions include 81–85 (DCPGH) and 136–139 (NKCD). Positions 136-139 (NKCD) are G4. Positions 174-176 (SAL) are G5.

This sequence belongs to the TRAFAC class translation factor GTPase superfamily. Classic translation factor GTPase family. EF-Tu/EF-1A subfamily. In terms of assembly, monomer.

It is found in the cytoplasm. It catalyses the reaction GTP + H2O = GDP + phosphate + H(+). Its function is as follows. GTP hydrolase that promotes the GTP-dependent binding of aminoacyl-tRNA to the A-site of ribosomes during protein biosynthesis. This Porphyromonas gingivalis (strain ATCC 33277 / DSM 20709 / CIP 103683 / JCM 12257 / NCTC 11834 / 2561) protein is Elongation factor Tu.